Reading from the N-terminus, the 64-residue chain is Large ribosomal subunit protein bL28 (64 aa).

Positions 1–23 are disordered; sequence MARKDQISHRGPLSGNNRSHALN.

The protein belongs to the bacterial ribosomal protein bL28 family.

The chain is Large ribosomal subunit protein bL28 from Mesomycoplasma hyopneumoniae (strain J / ATCC 25934 / NCTC 10110) (Mycoplasma hyopneumoniae).